A 403-amino-acid chain; its full sequence is Aminomethyltransferase, mitochondrial (403 aa).

Residues 1–28 constitute a mitochondrion transit peptide; sequence MHRIVSVVAPLGFRLQAQPLVQSRPLSS. Residues E232 and R261 each contribute to the substrate site. Position 368 is an N6-succinyllysine (K368). Y399 provides a ligand contact to substrate.

This sequence belongs to the GcvT family. As to quaternary structure, the glycine cleavage system is composed of four proteins: P, T, L and H.

Its subcellular location is the mitochondrion. It carries out the reaction N(6)-[(R)-S(8)-aminomethyldihydrolipoyl]-L-lysyl-[protein] + (6S)-5,6,7,8-tetrahydrofolate = N(6)-[(R)-dihydrolipoyl]-L-lysyl-[protein] + (6R)-5,10-methylene-5,6,7,8-tetrahydrofolate + NH4(+). The glycine cleavage system catalyzes the degradation of glycine. In Mus musculus (Mouse), this protein is Aminomethyltransferase, mitochondrial.